The chain runs to 266 residues: Interleukin-1 beta (266 aa).

A propeptide spanning residues 1 to 113 (MATVPEPINE…ETSSDELLCD (113 aa)) is cleaved from the precursor.

Belongs to the IL-1 family. As to quaternary structure, monomer. In its precursor form, weakly interacts with full-length MEFV; the mature cytokine does not interact at all. Interacts with integrins ITGAV:ITGBV and ITGA5:ITGB1; integrin-binding is required for IL1B signaling. Interacts with cargo receptor TMED10; the interaction is direct and is required for the secretion of IL1B mature form. Interacts with HSP90AB1; the interaction facilitates cargo translocation into the ERGIC. Interacts with HSP90B1; the interaction facilitates cargo translocation into the ERGIC.

It is found in the cytoplasm. The protein resides in the cytosol. The protein localises to the secreted. Its subcellular location is the lysosome. It localises to the extracellular exosome. Its function is as follows. Potent pro-inflammatory cytokine. Initially discovered as the major endogenous pyrogen, induces prostaglandin synthesis, neutrophil influx and activation, T-cell activation and cytokine production, B-cell activation and antibody production, and fibroblast proliferation and collagen production. Promotes Th17 differentiation of T-cells. Synergizes with IL12/interleukin-12 to induce IFNG synthesis from T-helper 1 (Th1) cells. Plays a role in angiogenesis by inducing VEGF production synergistically with TNF and IL6. Involved in transduction of inflammation downstream of pyroptosis: its mature form is specifically released in the extracellular milieu by passing through the gasdermin-D (GSDMD) pore. The polypeptide is Interleukin-1 beta (IL1B) (Capra hircus (Goat)).